We begin with the raw amino-acid sequence, 431 residues long: DNA polymerase delta subunit 2 (431 aa).

This sequence belongs to the DNA polymerase delta/II small subunit family. Component of both the DNA polymerase delta and DNA polymerase zeta complexes. The DNA polymerase delta complex consisting of three subunits: the catalytic subunit PolD1 and two accessory subunits PolD2/Pol31 and PolD3/Pol32. Within the delta complex, interacts with both PolD1 and PolD3, and is able to interact with PolD1 in the absence of PolD3. Component of the DNA polymerase zeta complex consisting of four subunits: the catalytic subunit PolZ1 and three accessory subunits PolZ2/Rev7, PolD2/Pol31 and PolD3/Pol32. In terms of tissue distribution, expressed in ovaries and embryos (at the protein level).

It is found in the nucleus. It localises to the nucleoplasm. Functionally, accessory component of both the DNA polymerase delta complex and possibly the DNA polymerase zeta complex. As a component of the delta complex, participates in high fidelity genome replication, including lagging strand synthesis, DNA recombination and repair. Appears to promote the function of the DNA pol-delta complex accessory subunit PolD3 in both embryonic and postembryonic somatic cells. This Drosophila melanogaster (Fruit fly) protein is DNA polymerase delta subunit 2.